Here is a 137-residue protein sequence, read N- to C-terminus: Diacylglycerol kinase (137 aa).

Glu42 is a binding site for a divalent metal cation. 2 helical membrane-spanning segments follow: residues 49–67 (LIAF…ATFF) and 73–89 (AILF…NTAI). The Proton acceptor role is filled by Glu83. Glu90 lines the a divalent metal cation pocket. A helical membrane pass occupies residues 112-132 (SFACLCLIVANGVYAAYVVIF).

The protein belongs to the bacterial diacylglycerol kinase family. Mg(2+) is required as a cofactor.

It localises to the cell inner membrane. The catalysed reaction is a 1,2-diacyl-sn-glycerol + ATP = a 1,2-diacyl-sn-glycero-3-phosphate + ADP + H(+). In terms of biological role, catalyzes the ATP-dependent phosphorylation of sn-l,2-diacylglycerol (DAG) to phosphatidic acid. Involved in the recycling of diacylglycerol produced as a by-product during membrane-derived oligosaccharide (MDO) biosynthesis. This chain is Diacylglycerol kinase (dgkA), found in Sinorhizobium sp.